We begin with the raw amino-acid sequence, 149 residues long: Large ribosomal subunit protein uL11 (149 aa).

Belongs to the universal ribosomal protein uL11 family. In terms of assembly, part of the ribosomal stalk of the 50S ribosomal subunit. Interacts with L10 and the large rRNA to form the base of the stalk. L10 forms an elongated spine to which L12 dimers bind in a sequential fashion forming a multimeric L10(L12)X complex. One or more lysine residues are methylated.

In terms of biological role, forms part of the ribosomal stalk which helps the ribosome interact with GTP-bound translation factors. The chain is Large ribosomal subunit protein uL11 from Azorhizobium caulinodans (strain ATCC 43989 / DSM 5975 / JCM 20966 / LMG 6465 / NBRC 14845 / NCIMB 13405 / ORS 571).